The primary structure comprises 369 residues: Protein RecA (369 aa).

Residue 66-73 participates in ATP binding; sequence GPESSGKT. Residues 328-369 are disordered; sequence GIDAESLEEKEDPEKVKEQRAKKAAPGEEKPAEPASPEKTDK. Over residues 339 to 369 the composition is skewed to basic and acidic residues; that stretch reads DPEKVKEQRAKKAAPGEEKPAEPASPEKTDK.

Belongs to the RecA family.

It is found in the cytoplasm. Its function is as follows. Can catalyze the hydrolysis of ATP in the presence of single-stranded DNA, the ATP-dependent uptake of single-stranded DNA by duplex DNA, and the ATP-dependent hybridization of homologous single-stranded DNAs. It interacts with LexA causing its activation and leading to its autocatalytic cleavage. The polypeptide is Protein RecA (Lactobacillus delbrueckii subsp. bulgaricus (strain ATCC BAA-365 / Lb-18)).